Consider the following 70-residue polypeptide: DNA-directed RNA polymerase subunit epsilon (70 aa).

It belongs to the RNA polymerase subunit epsilon family. RNAP is composed of a core of 2 alpha, a beta and a beta' subunit. The core is associated with a delta subunit, and at least one of epsilon or omega. When a sigma factor is associated with the core the holoenzyme is formed, which can initiate transcription.

The catalysed reaction is RNA(n) + a ribonucleoside 5'-triphosphate = RNA(n+1) + diphosphate. A non-essential component of RNA polymerase (RNAP). This chain is DNA-directed RNA polymerase subunit epsilon, found in Bacillus cereus (strain ZK / E33L).